A 283-amino-acid polypeptide reads, in one-letter code: Probable endonuclease 4 (283 aa).

Zn(2+) contacts are provided by His-69, His-109, Glu-145, Asp-179, His-182, His-216, Asp-229, His-231, and Glu-261.

The protein belongs to the AP endonuclease 2 family. Zn(2+) serves as cofactor.

The catalysed reaction is Endonucleolytic cleavage to 5'-phosphooligonucleotide end-products.. In terms of biological role, endonuclease IV plays a role in DNA repair. It cleaves phosphodiester bonds at apurinic or apyrimidinic (AP) sites, generating a 3'-hydroxyl group and a 5'-terminal sugar phosphate. The protein is Probable endonuclease 4 of Campylobacter curvus (strain 525.92).